The sequence spans 82 residues: Consomatin Mao1 (82 aa).

The N-terminal stretch at 1 to 22 is a signal peptide; sequence MQTASWVMVMMMVWITAPLSEG. Residues 23 to 57 constitute a propeptide that is removed on maturation; sequence GKLNDVIRGLVPDDVTPQLILRSLFFHRPSDSVVR. A disulfide bridge links Cys65 with Cys70. Trp67 carries the post-translational modification D-tryptophan. 4-hydroxyproline occurs at positions 71, 72, and 74. Residues 75 to 82 constitute a propeptide that is removed on maturation; that stretch reads WRRPNGKG.

Belongs to the conotoxin C superfamily. Consomatin family. Expressed by the venom duct.

Its subcellular location is the secreted. Its function is as follows. Moderately activates human somatostatin receptors (SSTR) with a preferential activation of SSTR1 and SSTR4. In vivo, does not cause behavioral changes in mice within a few minutes of intracranial injection, but causes a progressive loss of movement thereafter. Four to five hours after injection, mice recover, even with the highest dose tested. Shows antinociception and antihyperalgesia activities in two mouse models of acute pain, most probably by acting outside the central nervous system. The sequence is that of Consomatin Mao1 from Conus maioensis (Sea snail).